The sequence spans 449 residues: Methionine aminopeptidase 2 (449 aa).

Residues 1–91 (MAAQAAPELA…PRIPLTTLFP (91 aa)) form a disordered region. Residues 34–50 (EEAENEGDSDDDRDDEQ) show a composition bias toward acidic residues. The segment covering 61–75 (KKKKKKRPKKKKKTA) has biased composition (basic residues). A substrate-binding site is contributed by His199. The a divalent metal cation site is built by Asp219, Asp230, and His299. His307 contacts substrate. A divalent metal cation-binding residues include Glu335 and Glu430.

Belongs to the peptidase M24A family. Methionine aminopeptidase eukaryotic type 2 subfamily. Co(2+) is required as a cofactor. Requires Zn(2+) as cofactor. Mn(2+) serves as cofactor. The cofactor is Fe(2+).

It localises to the cytoplasm. It carries out the reaction Release of N-terminal amino acids, preferentially methionine, from peptides and arylamides.. Cotranslationally removes the N-terminal methionine from nascent proteins. The N-terminal methionine is often cleaved when the second residue in the primary sequence is small and uncharged (Met-Ala-, Cys, Gly, Pro, Ser, Thr, or Val). This chain is Methionine aminopeptidase 2, found in Arthroderma benhamiae (strain ATCC MYA-4681 / CBS 112371) (Trichophyton mentagrophytes).